Consider the following 305-residue polypeptide: tRNA dimethylallyltransferase (305 aa).

ATP is bound at residue 8-15; that stretch reads GPTAIGKS. Position 10–15 (10–15) interacts with substrate; the sequence is TAIGKS. The segment at 33-36 is interaction with substrate tRNA; the sequence is DSMA.

The protein belongs to the IPP transferase family. Monomer. Requires Mg(2+) as cofactor.

The enzyme catalyses adenosine(37) in tRNA + dimethylallyl diphosphate = N(6)-dimethylallyladenosine(37) in tRNA + diphosphate. Catalyzes the transfer of a dimethylallyl group onto the adenine at position 37 in tRNAs that read codons beginning with uridine, leading to the formation of N6-(dimethylallyl)adenosine (i(6)A). In Aquifex aeolicus (strain VF5), this protein is tRNA dimethylallyltransferase.